A 469-amino-acid chain; its full sequence is Neuraminidase (469 aa).

At 1–9 the chain is on the intravirion side; the sequence is MNPNQKIMT. The chain crosses the membrane as a helical span at residues 10-30; it reads IGSVSLIIAAVCFLMQIAILV. Positions 11-33 are involved in apical transport and lipid raft association; sequence GSVSLIIAAVCFLMQIAILVTTV. The Virion surface portion of the chain corresponds to 31–469; it reads TTVTLHFKQC…DGANINFMPI (439 aa). The hypervariable stalk region stretch occupies residues 36-88; that stretch reads HFKQCECDSPSNNQVKPCEPIIIERNITEIVYLNNTTIEKETCPKLVEYRNWS. N-linked (GlcNAc...) asparagine; by host glycosylation is found at Asn-61, Asn-69, Asn-70, and Asn-86. Positions 91–469 are head of neuraminidase; that stretch reads QCKITGFAPF…DGANINFMPI (379 aa). Cystine bridges form between Cys-92-Cys-417, Cys-124-Cys-129, Cys-183-Cys-230, Cys-232-Cys-237, Cys-278-Cys-291, Cys-280-Cys-289, Cys-318-Cys-337, and Cys-421-Cys-447. Arg-118 lines the substrate pocket. Residue Asn-146 is glycosylated (N-linked (GlcNAc...) asparagine; by host). Catalysis depends on Asp-151, which acts as the Proton donor/acceptor. Arg-152 is a binding site for substrate. 2 N-linked (GlcNAc...) asparagine; by host glycosylation sites follow: Asn-200 and Asn-234. Residue 276-277 participates in substrate binding; it reads EE. Arg-292 is a substrate binding site. Asp-293, Gly-297, and Asp-324 together coordinate Ca(2+). Residues 323–344 are disordered; the sequence is GDTPRNDDRSSKSNCRNPNNEK. A compositionally biased stretch (polar residues) spans 334–343; sequence KSNCRNPNNE. Arg-371 contacts substrate. Residue Asn-402 is glycosylated (N-linked (GlcNAc...) asparagine; by host). The active-site Nucleophile is the Tyr-406.

The protein belongs to the glycosyl hydrolase 34 family. As to quaternary structure, homotetramer. It depends on Ca(2+) as a cofactor. N-glycosylated.

The protein resides in the virion membrane. The protein localises to the host apical cell membrane. It carries out the reaction Hydrolysis of alpha-(2-&gt;3)-, alpha-(2-&gt;6)-, alpha-(2-&gt;8)- glycosidic linkages of terminal sialic acid residues in oligosaccharides, glycoproteins, glycolipids, colominic acid and synthetic substrates.. Inhibited by the neuraminidase inhibitors zanamivir (Relenza) and oseltamivir (Tamiflu). These drugs interfere with the release of progeny virus from infected cells and are effective against all influenza strains. Resistance to neuraminidase inhibitors is quite rare. Its function is as follows. Catalyzes the removal of terminal sialic acid residues from viral and cellular glycoconjugates. Cleaves off the terminal sialic acids on the glycosylated HA during virus budding to facilitate virus release. Additionally helps virus spread through the circulation by further removing sialic acids from the cell surface. These cleavages prevent self-aggregation and ensure the efficient spread of the progeny virus from cell to cell. Otherwise, infection would be limited to one round of replication. Described as a receptor-destroying enzyme because it cleaves a terminal sialic acid from the cellular receptors. May facilitate viral invasion of the upper airways by cleaving the sialic acid moieties on the mucin of the airway epithelial cells. Likely to plays a role in the budding process through its association with lipid rafts during intracellular transport. May additionally display a raft-association independent effect on budding. Plays a role in the determination of host range restriction on replication and virulence. Sialidase activity in late endosome/lysosome traffic seems to enhance virus replication. This Influenza A virus (strain A/Swine/Hong Kong/3/1976 H3N2) protein is Neuraminidase.